The sequence spans 354 residues: uncharacterized protein (354 aa).

Residues 43–63 (LIAVTLWSCVGSLLFICLLAV) traverse the membrane as a helical segment.

It is found in the cell membrane. This is an uncharacterized protein from Bacillus subtilis (strain 168).